A 268-amino-acid chain; its full sequence is Eukaryotic translation initiation factor 3 subunit J (268 aa).

Disordered regions lie at residues 1–117 (MTPS…DLKH) and 219–242 (NEKM…KTKV). Residues 26–44 (DEEDEEVLDSWDAAEDSEV) show a composition bias toward acidic residues. Residues 40–95 (EDSEVEREKAAKAAEAKAKAEAEAAAKKKSKAQRIEEHKAERRKNAEADSEEDEDE) adopt a coiled-coil conformation. Basic and acidic residues-rich tracts occupy residues 45 to 65 (EREK…EAAA) and 72 to 86 (QRIE…KNAE). Acidic residues predominate over residues 87–99 (ADSEEDEDEDEDE). 2 stretches are compositionally biased toward basic and acidic residues: residues 100 to 117 (AEKR…DLKH) and 220 to 232 (EKMR…DKGS).

This sequence belongs to the eIF-3 subunit J family. Component of the eukaryotic translation initiation factor 3 (eIF-3) complex.

Its subcellular location is the cytoplasm. Component of the eukaryotic translation initiation factor 3 (eIF-3) complex, which is involved in protein synthesis of a specialized repertoire of mRNAs and, together with other initiation factors, stimulates binding of mRNA and methionyl-tRNAi to the 40S ribosome. The eIF-3 complex specifically targets and initiates translation of a subset of mRNAs involved in cell proliferation. This chain is Eukaryotic translation initiation factor 3 subunit J (hcr1), found in Aspergillus clavatus (strain ATCC 1007 / CBS 513.65 / DSM 816 / NCTC 3887 / NRRL 1 / QM 1276 / 107).